The following is a 178-amino-acid chain: Transcription factor E (178 aa).

One can recognise an HTH TFE/IIEalpha-type domain in the interval 3–86; sequence AHEALAEIAG…YWRITDEPIQ (84 aa).

The protein belongs to the TFE family. Monomer. Interaction with RNA polymerase subunits RpoF and RpoE is necessary for Tfe stimulatory transcription activity. Able to interact with Tbp and RNA polymerase in the absence of DNA promoter. Interacts both with the preinitiation and elongation complexes.

Transcription factor that plays a role in the activation of archaeal genes transcribed by RNA polymerase. Facilitates transcription initiation by enhancing TATA-box recognition by TATA-box-binding protein (Tbp), and transcription factor B (Tfb) and RNA polymerase recruitment. Not absolutely required for transcription in vitro, but particularly important in cases where Tbp or Tfb function is not optimal. It dynamically alters the nucleic acid-binding properties of RNA polymerases by stabilizing the initiation complex and destabilizing elongation complexes. Seems to translocate with the RNA polymerase following initiation and acts by binding to the non template strand of the transcription bubble in elongation complexes. This is Transcription factor E from Thermofilum pendens (strain DSM 2475 / Hrk 5).